The primary structure comprises 382 residues: Intermediate transcription factor 3 large subunit (382 aa).

This sequence belongs to the orthopoxvirus OPG150 family. In terms of assembly, heterodimerizes with protein A8 to form the virus intermediate transcription factor (VITF)-3.

Functionally, acts with RNA polymerase to initiate transcription from intermediate gene promoters. In Homo sapiens (Human), this protein is Intermediate transcription factor 3 large subunit (OPG150).